Here is a 79-residue protein sequence, read N- to C-terminus: Sulfur carrier protein TusA (79 aa).

The active-site Cysteine persulfide intermediate is the C17.

It belongs to the sulfur carrier protein TusA family.

It is found in the cytoplasm. Sulfur carrier protein which probably makes part of a sulfur-relay system. This is Sulfur carrier protein TusA from Actinobacillus pleuropneumoniae serotype 7 (strain AP76).